The chain runs to 338 residues: Holliday junction branch migration complex subunit RuvB (338 aa).

The tract at residues glutamate 4–tyrosine 185 is large ATPase domain (RuvB-L). ATP contacts are provided by residues leucine 24, arginine 25, glycine 66, lysine 69, threonine 70, threonine 71, glutamate 132–phenylalanine 134, arginine 175, tyrosine 185, and arginine 222. A Mg(2+)-binding site is contributed by threonine 70. Residues proline 186–histidine 256 are small ATPAse domain (RuvB-S). The tract at residues alanine 259 to serine 338 is head domain (RuvB-H). Arginine 314 and arginine 319 together coordinate DNA.

It belongs to the RuvB family. Homohexamer. Forms an RuvA(8)-RuvB(12)-Holliday junction (HJ) complex. HJ DNA is sandwiched between 2 RuvA tetramers; dsDNA enters through RuvA and exits via RuvB. An RuvB hexamer assembles on each DNA strand where it exits the tetramer. Each RuvB hexamer is contacted by two RuvA subunits (via domain III) on 2 adjacent RuvB subunits; this complex drives branch migration. In the full resolvosome a probable DNA-RuvA(4)-RuvB(12)-RuvC(2) complex forms which resolves the HJ.

Its subcellular location is the cytoplasm. It catalyses the reaction ATP + H2O = ADP + phosphate + H(+). The RuvA-RuvB-RuvC complex processes Holliday junction (HJ) DNA during genetic recombination and DNA repair, while the RuvA-RuvB complex plays an important role in the rescue of blocked DNA replication forks via replication fork reversal (RFR). RuvA specifically binds to HJ cruciform DNA, conferring on it an open structure. The RuvB hexamer acts as an ATP-dependent pump, pulling dsDNA into and through the RuvAB complex. RuvB forms 2 homohexamers on either side of HJ DNA bound by 1 or 2 RuvA tetramers; 4 subunits per hexamer contact DNA at a time. Coordinated motions by a converter formed by DNA-disengaged RuvB subunits stimulates ATP hydrolysis and nucleotide exchange. Immobilization of the converter enables RuvB to convert the ATP-contained energy into a lever motion, pulling 2 nucleotides of DNA out of the RuvA tetramer per ATP hydrolyzed, thus driving DNA branch migration. The RuvB motors rotate together with the DNA substrate, which together with the progressing nucleotide cycle form the mechanistic basis for DNA recombination by continuous HJ branch migration. Branch migration allows RuvC to scan DNA until it finds its consensus sequence, where it cleaves and resolves cruciform DNA. The chain is Holliday junction branch migration complex subunit RuvB from Oenococcus oeni (strain ATCC BAA-331 / PSU-1).